Here is a 71-residue protein sequence, read N- to C-terminus: Translational regulator CsrA (71 aa).

The interval 50–71 is disordered; that stretch reads RIRHEKDGDVPEAAPGQGADPQ.

The protein belongs to the CsrA/RsmA family. Homodimer; the beta-strands of each monomer intercalate to form a hydrophobic core, while the alpha-helices form wings that extend away from the core.

It localises to the cytoplasm. Its function is as follows. A key translational regulator that binds mRNA to regulate translation initiation and/or mRNA stability. Mediates global changes in gene expression, shifting from rapid growth to stress survival by linking envelope stress, the stringent response and the catabolite repression systems. Usually binds in the 5'-UTR; binding at or near the Shine-Dalgarno sequence prevents ribosome-binding, repressing translation, binding elsewhere in the 5'-UTR can activate translation and/or stabilize the mRNA. Its function is antagonized by small RNA(s). The protein is Translational regulator CsrA of Halorhodospira halophila (strain DSM 244 / SL1) (Ectothiorhodospira halophila (strain DSM 244 / SL1)).